The following is a 303-amino-acid chain: MKNDQIVFEKTKNIAHDINQMQNQQEIIDYLFRQDSLTLNQLKHYYSEPSLPLQFLVKVAVLCMFISMTLASFLFIQAKEVFTNTILSDISPAVFSIFTVICIFMTYTKIIKKGNKNKGKASLNQRSEFYEKNKLINTILYKKYKMDQQNIQANKHTASDNEDSMNFSAVLNHVLTISKNDKELLGYLDTRDNAMLSQLKAYFSTRPFSLPHYMSLMFCGSIIVVYATSLFSGQINYIDIPHIFIFLLLIIFLKILIDLIKLLNISRKGQLHTVLHFAQRAEYLRMRGVIDFILTERYNKKIM.

A run of 4 helical transmembrane segments spans residues 55 to 77 (FLVK…LFIQ), 92 to 111 (PAVF…TKII), 208 to 230 (FSLP…ATSL), and 240 to 257 (IPHI…KILI).

The protein localises to the cell membrane. This is an uncharacterized protein from Bacillus subtilis (strain 168).